A 103-amino-acid chain; its full sequence is MQLYTYLYLLVPLVTFHLILGTGTLDHGGALTERRSTDATALKPEPVLQKSAARSTDDNGKDRLTQMKRILKKRGKNARGDEEYSKFIEREREAGRLDLSKFP.

The signal sequence occupies residues 1-21 (MQLYTYLYLLVPLVTFHLILG). Residues 22 to 79 (TGTLDHGGALTERRSTDATALKPEPVLQKSAARSTDDNGKDRLTQMKRILKKRGKNAR) constitute a propeptide that is removed on maturation. Residues 34-64 (RRSTDATALKPEPVLQKSAARSTDDNGKDRL) form a disordered region. The segment covering 55 to 64 (STDDNGKDRL) has biased composition (basic and acidic residues). A 4-carboxyglutamate mark is found at glutamate 82, glutamate 83, glutamate 89, and glutamate 93. 2 residues coordinate a divalent metal cation: glutamate 89 and glutamate 93.

It belongs to the conotoxin B superfamily. The cofactor is Ca(2+). Requires Mg(2+) as cofactor. In terms of tissue distribution, expressed by the venom duct.

It localises to the secreted. Its function is as follows. Conantokins inhibit N-methyl-D-aspartate (NMDA) receptors. This toxin inhibits NR2 subunits N-methyl-D-aspartate (NMDA) receptor-mediated calcium influx in central nervous system neurons in the following order of preference: NR2B/GRIN2B (IC(50)=0.14 uM), NR2D/GRIN2D (IC(50)=0.31 uM), NR2A/GRIN2A (IC(50)=0.68 uM) and NR2C/GRIN2A (IC(50)=4.9 uM), when tested on rat receptors. This is Conantokin-Br from Conus sulcatus (Sulcate cone).